The sequence spans 211 residues: DNA-directed RNA polymerases I, II, and III subunit RPABC1 (211 aa).

This sequence belongs to the archaeal Rpo5/eukaryotic RPB5 RNA polymerase subunit family. In terms of assembly, component of the RNA polymerase I (Pol I), RNA polymerase II (Pol II) and RNA polymerase III (Pol III) complexes consisting of at least 13, 12 and 17 subunits, respectively. In RNA Pol II, this subunit is present in 2-fold molar excess over the other subunits.

It localises to the nucleus. DNA-dependent RNA polymerase catalyzes the transcription of DNA into RNA using the four ribonucleoside triphosphates as substrates. Common component of RNA polymerases I, II and III which synthesize ribosomal RNA precursors, mRNA precursors and many functional non-coding RNAs, and small RNAs, such as 5S rRNA and tRNAs, respectively. Pol II is the central component of the basal RNA polymerase II transcription machinery. Pols are composed of mobile elements that move relative to each other. In Pol II, RPB5 is part of the lower jaw surrounding the central large cleft and thought to grab the incoming DNA template. Seems to be the major component in this process. This Caenorhabditis elegans protein is DNA-directed RNA polymerases I, II, and III subunit RPABC1 (rpb-5).